A 206-amino-acid chain; its full sequence is Pyridoxal 5'-phosphate synthase subunit PdxT (206 aa).

59–61 (GES) lines the L-glutamine pocket. The active-site Nucleophile is Cys-91. L-glutamine contacts are provided by residues Arg-123 and 151–152 (IR). Catalysis depends on charge relay system residues His-187 and Glu-189.

The protein belongs to the glutaminase PdxT/SNO family. In the presence of PdxS, forms a dodecamer of heterodimers. Only shows activity in the heterodimer.

The enzyme catalyses aldehydo-D-ribose 5-phosphate + D-glyceraldehyde 3-phosphate + L-glutamine = pyridoxal 5'-phosphate + L-glutamate + phosphate + 3 H2O + H(+). It carries out the reaction L-glutamine + H2O = L-glutamate + NH4(+). The protein operates within cofactor biosynthesis; pyridoxal 5'-phosphate biosynthesis. In terms of biological role, catalyzes the hydrolysis of glutamine to glutamate and ammonia as part of the biosynthesis of pyridoxal 5'-phosphate. The resulting ammonia molecule is channeled to the active site of PdxS. The sequence is that of Pyridoxal 5'-phosphate synthase subunit PdxT from Mycobacterium sp. (strain KMS).